The sequence spans 159 residues: SsrA-binding protein (159 aa).

It belongs to the SmpB family.

It localises to the cytoplasm. Required for rescue of stalled ribosomes mediated by trans-translation. Binds to transfer-messenger RNA (tmRNA), required for stable association of tmRNA with ribosomes. tmRNA and SmpB together mimic tRNA shape, replacing the anticodon stem-loop with SmpB. tmRNA is encoded by the ssrA gene; the 2 termini fold to resemble tRNA(Ala) and it encodes a 'tag peptide', a short internal open reading frame. During trans-translation Ala-aminoacylated tmRNA acts like a tRNA, entering the A-site of stalled ribosomes, displacing the stalled mRNA. The ribosome then switches to translate the ORF on the tmRNA; the nascent peptide is terminated with the 'tag peptide' encoded by the tmRNA and targeted for degradation. The ribosome is freed to recommence translation, which seems to be the essential function of trans-translation. In Dichelobacter nodosus (strain VCS1703A), this protein is SsrA-binding protein.